We begin with the raw amino-acid sequence, 367 residues long: 3-dehydroquinate synthase (367 aa).

NAD(+) contacts are provided by residues 69–74 (DGEAFK), 103–107 (GVIGD), 127–128 (TT), K140, and K149. E182, H245, and H262 together coordinate Zn(2+).

This sequence belongs to the sugar phosphate cyclases superfamily. Dehydroquinate synthase family. Requires Co(2+) as cofactor. It depends on Zn(2+) as a cofactor. NAD(+) serves as cofactor.

The protein localises to the cytoplasm. It carries out the reaction 7-phospho-2-dehydro-3-deoxy-D-arabino-heptonate = 3-dehydroquinate + phosphate. The protein operates within metabolic intermediate biosynthesis; chorismate biosynthesis; chorismate from D-erythrose 4-phosphate and phosphoenolpyruvate: step 2/7. Functionally, catalyzes the conversion of 3-deoxy-D-arabino-heptulosonate 7-phosphate (DAHP) to dehydroquinate (DHQ). This chain is 3-dehydroquinate synthase, found in Ectopseudomonas mendocina (strain ymp) (Pseudomonas mendocina).